The chain runs to 1224 residues: Cytosolic carboxypeptidase 1 (1224 aa).

Positions 361-398 (PPDVDDVVDESDDNDDAETESEIETEDDKDQNFKNDDI) are disordered. Residues 363–389 (DVDDVVDESDDNDDAETESEIETEDDK) show a composition bias toward acidic residues. The Peptidase M14 domain occupies 846–1136 (YPYTYSTLKM…KFCVGLLRLK (291 aa)). Residues histidine 918, glutamate 921, and histidine 1015 each coordinate Zn(2+). The active-site Proton donor/acceptor is glutamate 1100. Residues 1186–1197 (SAESNDDQDAEL) are compositionally biased toward acidic residues. The tract at residues 1186 to 1224 (SAESNDDQDAELADNVGDYEANNQEDGLSDSDSTRILLS) is disordered. Polar residues predominate over residues 1206–1224 (ANNQEDGLSDSDSTRILLS).

This sequence belongs to the peptidase M14 family. The cofactor is Zn(2+).

The protein localises to the cytoplasm. Its subcellular location is the cytosol. It is found in the nucleus. The protein resides in the mitochondrion. The enzyme catalyses (L-glutamyl)(n+1)-gamma-L-glutamyl-L-glutamyl-[protein] + H2O = (L-glutamyl)(n)-gamma-L-glutamyl-L-glutamyl-[protein] + L-glutamate. It carries out the reaction C-terminal L-alpha-aminoacyl-L-glutamyl-L-glutamyl-[tubulin] + H2O = C-terminal L-alpha-aminoacyl-L-glutamyl-[tubulin] + L-glutamate. Its function is as follows. Metallocarboxypeptidase that mediates protein deglutamylation of tubulin and non-tubulin target proteins. Catalyzes the removal of polyglutamate side chains present on the gamma-carboxyl group of glutamate residues within the C-terminal tail of alpha- and beta-tubulin. Specifically cleaves tubulin long-side-chains, while it is not able to remove the branching point glutamate. Also catalyzes the removal of polyglutamate residues from the carboxy-terminus of alpha-tubulin as well as non-tubulin proteins. The chain is Cytosolic carboxypeptidase 1 (AGTPBP1) from Gallus gallus (Chicken).